Consider the following 248-residue polypeptide: UPF0246 protein MYPE6270 (248 aa).

It belongs to the UPF0246 family.

This Malacoplasma penetrans (strain HF-2) (Mycoplasma penetrans) protein is UPF0246 protein MYPE6270.